Consider the following 329-residue polypeptide: MARRYLLEFEKPLVELEKQIEQIRELARDSEVDVSQQLLQLETLAARRREEIFNALTPAQKIQVARHPQRPSTLDFIQMFCDDWVELHGDRNCSDDKALIGGIARIEEKSVLVIGQQKGRDTKENVARNFGMAKPGGYRKALRLMNHADRFKLPIISFIDTPGAYAGLLAEEQGQGEAIAVNLREMFRLRVPIISTVIGEGGSGGALGIGVADRLLMFEHSVYTVASPEACASILWRDAGKAPDAAAALKITGSDLMALGIVDEVLSEPSGGNNWAPLKAGEVLKESLIRNLRELDSLSIRQLRDKRYEKFRQMGRFLEPSSLDEELIT.

Residues 40-294 (QLETLAARRR…KESLIRNLRE (255 aa)) enclose the CoA carboxyltransferase C-terminal domain.

Belongs to the AccA family. Acetyl-CoA carboxylase is a heterohexamer composed of biotin carboxyl carrier protein (AccB), biotin carboxylase (AccC) and two subunits each of ACCase subunit alpha (AccA) and ACCase subunit beta (AccD).

It is found in the cytoplasm. It carries out the reaction N(6)-carboxybiotinyl-L-lysyl-[protein] + acetyl-CoA = N(6)-biotinyl-L-lysyl-[protein] + malonyl-CoA. The protein operates within lipid metabolism; malonyl-CoA biosynthesis; malonyl-CoA from acetyl-CoA: step 1/1. In terms of biological role, component of the acetyl coenzyme A carboxylase (ACC) complex. First, biotin carboxylase catalyzes the carboxylation of biotin on its carrier protein (BCCP) and then the CO(2) group is transferred by the carboxyltransferase to acetyl-CoA to form malonyl-CoA. This chain is Acetyl-coenzyme A carboxylase carboxyl transferase subunit alpha, found in Prochlorococcus marinus (strain MIT 9211).